Consider the following 574-residue polypeptide: MRFSSCYIPTLKESPADAEVISHKLLLRAGMVRRLTSGLYIYLPLGLRVINKIARTVREEMEKAGFRELLMPMVQPGDLWKETGRWEHYGKELLRFKDRNEREYCLGPTHEEVITDLVRGEVRSYRQLPVRLYQVQTKFRDEIRPRFGLMRGREFMMKDGYSFDATAEGAEESYKIMYDAYMSIFSRLGLRFRAVEADTGSIGGNFSHEFMVLADTGEDTIAFCHDCEYAANVERAEVAWRGSPSTGGCPAMEKIATPGAHSVEELTALLGVPASAIVKTMLFKVDGKTVAVLVRGDREVNDIKLKNLLKAQEVELADAATVQAVTAAPVGFAGPVALDVPVYADAELQGGTDYVVGANAADAHLKHVDLARDAAVTAWADLRAITADDQCPRCGGRMELTRGIEVGHIFMLGLKYSEAMHAVFLDENGKERTMIMGCYGIGVSRVAAAAIEQNHDEHGIVFPPPVAPFECVLLNLDPRSEEVNAKVEEIYALLQGMGIEVLLDDREERPGVKFKDADLLGIPMQLVVGGKGLGRGIVECKDRRTGEKGELSAASLEQDFAAWSEKVRQGWASR.

Belongs to the class-II aminoacyl-tRNA synthetase family. ProS type 1 subfamily. In terms of assembly, homodimer.

The protein localises to the cytoplasm. It carries out the reaction tRNA(Pro) + L-proline + ATP = L-prolyl-tRNA(Pro) + AMP + diphosphate. In terms of biological role, catalyzes the attachment of proline to tRNA(Pro) in a two-step reaction: proline is first activated by ATP to form Pro-AMP and then transferred to the acceptor end of tRNA(Pro). As ProRS can inadvertently accommodate and process non-cognate amino acids such as alanine and cysteine, to avoid such errors it has two additional distinct editing activities against alanine. One activity is designated as 'pretransfer' editing and involves the tRNA(Pro)-independent hydrolysis of activated Ala-AMP. The other activity is designated 'posttransfer' editing and involves deacylation of mischarged Ala-tRNA(Pro). The misacylated Cys-tRNA(Pro) is not edited by ProRS. This Desulfovibrio desulfuricans (strain ATCC 27774 / DSM 6949 / MB) protein is Proline--tRNA ligase.